A 348-amino-acid chain; its full sequence is Dihydroorotase (348 aa).

Residues H14 and H16 each coordinate Zn(2+). Substrate is bound by residues 16–18 (HLR) and N42. 3 residues coordinate Zn(2+): K100, H137, and H175. K100 bears the N6-carboxylysine mark. A substrate-binding site is contributed by H137. Residue L220 participates in substrate binding. D248 contacts Zn(2+). D248 is a catalytic residue. H252 and A264 together coordinate substrate.

The protein belongs to the metallo-dependent hydrolases superfamily. DHOase family. Class II DHOase subfamily. Homodimer. The cofactor is Zn(2+).

The catalysed reaction is (S)-dihydroorotate + H2O = N-carbamoyl-L-aspartate + H(+). It participates in pyrimidine metabolism; UMP biosynthesis via de novo pathway; (S)-dihydroorotate from bicarbonate: step 3/3. Functionally, catalyzes the reversible cyclization of carbamoyl aspartate to dihydroorotate. The sequence is that of Dihydroorotase from Pseudomonas putida (strain GB-1).